Consider the following 108-residue polypeptide: Ig kappa chain V-V region HP 93G7 (108 aa).

The tract at residues 1–23 is framework-1; sequence DIQMTQTTSSLSASLGDRVTISC. Residues cysteine 23 and cysteine 88 are joined by a disulfide bond. Residues 24-34 form a complementarity-determining-1 region; the sequence is RASQDISNYLN. The framework-2 stretch occupies residues 35–49; it reads WYQQKPDGTVKLLIY. A complementarity-determining-2 region spans residues 50–56; the sequence is YTSRLHS. The segment at 57–88 is framework-3; the sequence is GVPSRFSGSGSGTDYSLTISNLEQEDIATYFC. Residues 89 to 97 are complementarity-determining-3; the sequence is QQGNMLPRT. A framework-4 region spans residues 98–108; the sequence is FGGGTKLEIKR.

This Mus musculus (Mouse) protein is Ig kappa chain V-V region HP 93G7.